An 878-amino-acid chain; its full sequence is MQPYNQSVNEVLEETKSQFEGLSPKEVKNRQAKDGFNELKEKKKTSTWELFIDTLKDPMVIILLLVAFVQLFLGEFVESLVIFIVLMINSVVAVVQTKRAESSLDALRQMSAPSAKVLRNGEKTSIPARELVVGDIVSLEAGDFIPADGRLIDVQNLRVEEGMLTGESEPVEKFSDVIEGEVALGDRKNMVFSSSLVVYGRADFLVTAIAEQTEIGKIAQMLETAEAKQTPLQQKLEKFGKQLGWVILALCALIFAVQILRLFTTNQTADMQKAVLDSFMFAVAVAVAAIPEALSSVVTIVLSVGTNKMAKQHAIMRNLPAVETLGSTSVICTDKTGTLTQNKMTVVDSFLPTQGSKELTDLTQADQKLLLNAMVLCNDSSFSQEGQLLGDPTEVALIAYSDKIGYPYQDLREKSPRLAEFPFDSERKLMSTINDFEGQKTIFVKGGPDVLFNRCNQVFLDGKVQEFTPELKEKFQAQNEAFSQKALRVLAYAYKPVSDNKTELTLTDENDLILIGLSAMIDPPREAVYDSIAEAKKAGIKTIMITGDHKTTAQAIAKDIGLMNEGDMALTGQELDALTEDELRENLEKISVYARVSPENKIRIVRAWQNEHQVTAMTGDGVNDAPALKQANIGIAMGSGTDVAKDASSMILTDDNFVSIVSAVSIGRVVYDNIKKSISYLFSGNLGAIIAIVFALVVGWVNPFTALQLLFINLVNDSVPAIALGMEKAEPDVMEKAPRQLNEGIFANGLMRVILIRGSLIGIAAIISQYVGQKTSPEMGVAMAFTTLILARTLQTFAARSNSQNILKLGFTTNKYVLMAVTFCLALYSLTTLPFLREIFSIPAAFGWSQWIVAAGLAVIAVICMEILKSIKGVFEKH.

4 consecutive transmembrane segments (helical) span residues 50 to 72 (LFID…VQLF), 76 to 95 (FVES…VAVV), 243 to 263 (LGWV…LRLF), and 281 to 301 (FAVA…VTIV). Ca(2+) is bound by residues V287, A288, I290, and E292. Catalysis depends on D334, which acts as the 4-aspartylphosphate intermediate. The next 6 membrane-spanning stretches (helical) occupy residues 681–701 (LFSG…VGWV), 704–724 (FTAL…AIAL), 753–773 (VILI…YVGQ), 779–799 (MGVA…TFAA), 816–836 (YVLM…LPFL), and 845–865 (AFGW…VICM). Residues N713 and D717 each coordinate Ca(2+).

It belongs to the cation transport ATPase (P-type) (TC 3.A.3) family. Type IIA subfamily.

Its subcellular location is the cell membrane. The enzyme catalyses Ca(2+)(in) + ATP + H2O = Ca(2+)(out) + ADP + phosphate + H(+). Its activity is regulated as follows. Inhibited by very high concentrations of cyclopiazonic acid (CPA). Its function is as follows. Catalyzes the hydrolysis of ATP coupled with the transport of calcium. This is Calcium-transporting ATPase 1 (yoaB) from Lactococcus lactis subsp. lactis (strain IL1403) (Streptococcus lactis).